The following is an 828-amino-acid chain: Kinesin-associated protein 3 (828 aa).

ARM repeat units follow at residues 332 to 372 (YVEN…NLSF), 373 to 411 (DTDL…HVSQ), and 577 to 611 (DDSC…CQIV).

As to quaternary structure, heterotrimer of a 115 kDa subunit (KAP115) and two kinesin-like subunits of 95 kDa (KRP95) and 85 kDa (KRP85).

Functionally, binds to the tail domain of the KRP85/KRP95 heterodimer to form a heterotrimeric kinesin-II complex and may regulate the spindle vesicle targeting of this complex. The sequence is that of Kinesin-associated protein 3 (KAP115) from Strongylocentrotus purpuratus (Purple sea urchin).